Consider the following 208-residue polypeptide: Uracil phosphoribosyltransferase (208 aa).

5-phospho-alpha-D-ribose 1-diphosphate-binding positions include Arg-78, Arg-103, and 130–138 (DPMLATGGT). Uracil is bound by residues Ile-193 and 198-200 (GDA). Asp-199 serves as a coordination point for 5-phospho-alpha-D-ribose 1-diphosphate.

It belongs to the UPRTase family. It depends on Mg(2+) as a cofactor.

It carries out the reaction UMP + diphosphate = 5-phospho-alpha-D-ribose 1-diphosphate + uracil. The protein operates within pyrimidine metabolism; UMP biosynthesis via salvage pathway; UMP from uracil: step 1/1. With respect to regulation, allosterically activated by GTP. Its function is as follows. Catalyzes the conversion of uracil and 5-phospho-alpha-D-ribose 1-diphosphate (PRPP) to UMP and diphosphate. In Solidesulfovibrio magneticus (strain ATCC 700980 / DSM 13731 / RS-1) (Desulfovibrio magneticus), this protein is Uracil phosphoribosyltransferase.